We begin with the raw amino-acid sequence, 237 residues long: Proteasome subunit beta 2 (237 aa).

A compositionally biased stretch (polar residues) spans 1-14 (MNNWSQGSTPQGSD). Residues 1–42 (MNNWSQGSTPQGSDPSPYAPELGSLPDGSQSDDHGDTVNKTG) constitute a propeptide, removed in mature form; by autocatalysis. Residues 1-45 (MNNWSQGSTPQGSDPSPYAPELGSLPDGSQSDDHGDTVNKTGTTT) are disordered. The active-site Nucleophile is the Thr43.

It belongs to the peptidase T1B family. The 20S proteasome core is composed of 14 alpha and 14 beta subunits that assemble into four stacked heptameric rings, resulting in a barrel-shaped structure. The two inner rings, each composed of seven catalytic beta subunits, are sandwiched by two outer rings, each composed of seven alpha subunits. The catalytic chamber with the active sites is on the inside of the barrel. Has a gated structure, the ends of the cylinder being occluded by the N-termini of the alpha-subunits. Is capped at one or both ends by the proteasome regulatory ATPase, PAN.

It localises to the cytoplasm. It carries out the reaction Cleavage of peptide bonds with very broad specificity.. The formation of the proteasomal ATPase PAN-20S proteasome complex, via the docking of the C-termini of PAN into the intersubunit pockets in the alpha-rings, triggers opening of the gate for substrate entry. Interconversion between the open-gate and close-gate conformations leads to a dynamic regulation of the 20S proteasome proteolysis activity. In terms of biological role, component of the proteasome core, a large protease complex with broad specificity involved in protein degradation. This chain is Proteasome subunit beta 2, found in Haloterrigena turkmenica (strain ATCC 51198 / DSM 5511 / JCM 9101 / NCIMB 13204 / VKM B-1734 / 4k) (Halococcus turkmenicus).